Consider the following 596-residue polypeptide: Elongation factor 4 (596 aa).

The tr-type G domain occupies 2-184 (RNIRNFSIIA…AIVHRIPPPT (183 aa)). GTP is bound by residues 14–19 (DHGKST) and 131–134 (NKID).

The protein belongs to the TRAFAC class translation factor GTPase superfamily. Classic translation factor GTPase family. LepA subfamily.

The protein localises to the cell inner membrane. It carries out the reaction GTP + H2O = GDP + phosphate + H(+). In terms of biological role, required for accurate and efficient protein synthesis under certain stress conditions. May act as a fidelity factor of the translation reaction, by catalyzing a one-codon backward translocation of tRNAs on improperly translocated ribosomes. Back-translocation proceeds from a post-translocation (POST) complex to a pre-translocation (PRE) complex, thus giving elongation factor G a second chance to translocate the tRNAs correctly. Binds to ribosomes in a GTP-dependent manner. The sequence is that of Elongation factor 4 from Xanthomonas oryzae pv. oryzae (strain PXO99A).